The following is a 152-amino-acid chain: Ubiquitin-conjugating enzyme E2 W (152 aa).

Met1 is covalently cross-linked (Peptide (Met-Gly) (interchain with G-Cter in ubiquitin)). Positions 4-152 constitute a UBC core domain; sequence AATRRLMKEL…TRWWFHDDSV (149 aa). Catalysis depends on Cys92, which acts as the Glycyl thioester intermediate.

This sequence belongs to the ubiquitin-conjugating enzyme family.

It catalyses the reaction S-ubiquitinyl-[E1 ubiquitin-activating enzyme]-L-cysteine + [E2 ubiquitin-conjugating enzyme]-L-cysteine = [E1 ubiquitin-activating enzyme]-L-cysteine + S-ubiquitinyl-[E2 ubiquitin-conjugating enzyme]-L-cysteine.. The enzyme catalyses S-ubiquitinyl-[E1 ubiquitin-activating enzyme]-L-cysteine + [acceptor protein]-N-terminal-amino acid = [E1 ubiquitin-activating enzyme]-L-cysteine + N-terminal-ubiquitinyl-[acceptor protein].. The protein operates within protein modification; protein ubiquitination. In terms of biological role, accepts ubiquitin from the E1 complex and catalyzes its covalent attachment to other proteins. Together with ubc-18, required for the ubiquitination of membranous organelles, and the removal of paternal mitochondria from early embryos. The chain is Ubiquitin-conjugating enzyme E2 W from Caenorhabditis elegans.